Consider the following 285-residue polypeptide: MSDDFLWFEGIAFPNMGFRSETLRKVRDEFVIKDEDVIILTYPKSGTNWLIEILCLIHSNGDPKWIQSVPIWERSPWVETEMGYKLLSEEEGPRLFSSHLPIQLFPKSFFSSKAKVIYLMRNPRDVFVSGYFFWNSVKFVKKPKSWQQYFEWFCQGNVIYGSWFDHIHGWMPMREKKNFLLLSYEELKQDTRRTVEKICQFLGKTLEPEELNLILKNSSFQSMKENKMSNFSLLSVDFVEEKAQLLRKGISGDWKNHLTVAQAEAFDKLFQEKMTDLPRELFPWE.

The 3'-phosphoadenylyl sulfate site is built by lysine 44, serine 45, glycine 46, threonine 47, asparagine 48, and tryptophan 49. Histidine 99 serves as the catalytic Proton acceptor. 3'-phosphoadenylyl sulfate-binding residues include arginine 121, serine 129, tyrosine 184, serine 218, methionine 223, arginine 247, lysine 248, and glycine 249. A Phosphoserine modification is found at serine 251.

The protein belongs to the sulfotransferase 1 family. As to quaternary structure, homodimer. In terms of tissue distribution, predominanly expressed in liver. Detected also in adrenal gland and in jejunum.

It localises to the cytoplasm. Its subcellular location is the cytosol. It carries out the reaction an alcohol + 3'-phosphoadenylyl sulfate = an alkyl sulfate + adenosine 3',5'-bisphosphate + H(+). The catalysed reaction is 3beta-hydroxyandrost-5-en-17-one + 3'-phosphoadenylyl sulfate = dehydroepiandrosterone 3-sulfate + adenosine 3',5'-bisphosphate + H(+). The enzyme catalyses taurolithocholate + 3'-phosphoadenylyl sulfate = taurolithocholate 3-sulfate + adenosine 3',5'-bisphosphate + H(+). It catalyses the reaction lithocholate + 3'-phosphoadenylyl sulfate = lithocholate sulfate + adenosine 3',5'-bisphosphate + H(+). It carries out the reaction (24S)-hydroxycholesterol + 3'-phosphoadenylyl sulfate = (24S)-hydroxycholesterol 24-sulfate + adenosine 3',5'-bisphosphate + H(+). The catalysed reaction is (24S)-hydroxycholesterol + 3'-phosphoadenylyl sulfate = (24S)-hydroxycholesterol 3-sulfate + adenosine 3',5'-bisphosphate + H(+). The enzyme catalyses (24S)-hydroxycholesterol 24-sulfate + 3'-phosphoadenylyl sulfate = (24S)-hydroxycholesterol 3,24-disulfate + adenosine 3',5'-bisphosphate + H(+). It catalyses the reaction pregnenolone + 3'-phosphoadenylyl sulfate = pregnenolone sulfate + adenosine 3',5'-bisphosphate + H(+). It carries out the reaction androsterone + 3'-phosphoadenylyl sulfate = androsterone 3alpha-sulfate + adenosine 3',5'-bisphosphate + H(+). Its function is as follows. Sulfotransferase that utilizes 3'-phospho-5'-adenylyl sulfate (PAPS) as sulfonate donor to catalyze the sulfonation of steroids and bile acids in the liver and adrenal glands. Mediates the sulfation of a wide range of steroids and sterols, including pregnenolone, androsterone, DHEA, bile acids, cholesterol and as well many xenobiotics that contain alcohol and phenol functional groups. Sulfonation increases the water solubility of most compounds, and therefore their renal excretion, but it can also result in bioactivation to form active metabolites. Plays an important role in maintening steroid and lipid homeostasis. Plays a key role in bile acid metabolism. In addition, catalyzes the metabolic activation of potent carcinogenic polycyclic arylmethanols. This chain is Sulfotransferase 2A1 (SULT2A1), found in Macaca fascicularis (Crab-eating macaque).